A 374-amino-acid polypeptide reads, in one-letter code: Severin (374 aa).

3 Gelsolin-like repeats span residues 58–109 (FTLE…DEYG), 180–220 (EGKT…KCSA), and 278–369 (EVIK…SFLK).

Belongs to the villin/gelsolin family.

In terms of biological role, severin blocks the ends of F-actin and causes the fragmentation and depolymerization of actin filaments. This severin binds stably with actin both in a Ca(2+) dependent and a Ca(2+) independent manner. The sequence is that of Severin (AG8) from Echinococcus granulosus (Hydatid tapeworm).